We begin with the raw amino-acid sequence, 401 residues long: 1-deoxy-D-xylulose 5-phosphate reductoisomerase (401 aa).

NADPH-binding residues include T10, G11, S12, I13, G36, R37, N38, and N124. K125 provides a ligand contact to 1-deoxy-D-xylulose 5-phosphate. E126 provides a ligand contact to NADPH. A Mn(2+)-binding site is contributed by D150. S151, E152, S176, and H199 together coordinate 1-deoxy-D-xylulose 5-phosphate. E152 contacts Mn(2+). Residue G205 participates in NADPH binding. 1-deoxy-D-xylulose 5-phosphate contacts are provided by S212, N217, K218, and E221. E221 is a binding site for Mn(2+).

This sequence belongs to the DXR family. Mg(2+) is required as a cofactor. It depends on Mn(2+) as a cofactor.

It catalyses the reaction 2-C-methyl-D-erythritol 4-phosphate + NADP(+) = 1-deoxy-D-xylulose 5-phosphate + NADPH + H(+). The protein operates within isoprenoid biosynthesis; isopentenyl diphosphate biosynthesis via DXP pathway; isopentenyl diphosphate from 1-deoxy-D-xylulose 5-phosphate: step 1/6. Catalyzes the NADPH-dependent rearrangement and reduction of 1-deoxy-D-xylulose-5-phosphate (DXP) to 2-C-methyl-D-erythritol 4-phosphate (MEP). The protein is 1-deoxy-D-xylulose 5-phosphate reductoisomerase of Acaryochloris marina (strain MBIC 11017).